The sequence spans 151 residues: UPAR/Ly6 domain-containing protein crok (151 aa).

A signal peptide spans 1–23 (MKTLEKYILFAIVLCCLLQLGQA). Over 24-128 (IKCWDCRSDN…KDGCNSAGIH (105 aa)) the chain is Lumenal. 5 cysteine pairs are disulfide-bonded: C26–C68, C29–C37, C51–C85, C100–C114, and C116–C122. N-linked (GlcNAc...) asparagine glycosylation occurs at N43. S124 carries GPI-anchor amidated serine lipidation. Positions 125-151 (AGIHRLGLMGVLTGTLLSVIVAHLLRQ) are cleaved as a propeptide — removed in mature form. A helical membrane pass occupies residues 129-149 (RLGLMGVLTGTLLSVIVAHLL). The Cytoplasmic segment spans residues 150–151 (RQ).

Belongs to the quiver family.

It localises to the vesicle. It is found in the membrane. The protein localises to the endomembrane system. In terms of biological role, required for septate junction assembly, possibly by organizing the preassembly and transport of septate junction proteins including dlg1/disks large 1 and Nrx-IV/Neurexin-IV. Involved in paracellular barrier functions of trachea, hindgut and salivary gland mediated by epithelial cell septate junctions. The sequence is that of UPAR/Ly6 domain-containing protein crok from Drosophila melanogaster (Fruit fly).